We begin with the raw amino-acid sequence, 194 residues long: Probable nicotinate-nucleotide adenylyltransferase (194 aa).

This sequence belongs to the NadD family.

The enzyme catalyses nicotinate beta-D-ribonucleotide + ATP + H(+) = deamido-NAD(+) + diphosphate. It participates in cofactor biosynthesis; NAD(+) biosynthesis; deamido-NAD(+) from nicotinate D-ribonucleotide: step 1/1. Functionally, catalyzes the reversible adenylation of nicotinate mononucleotide (NaMN) to nicotinic acid adenine dinucleotide (NaAD). The polypeptide is Probable nicotinate-nucleotide adenylyltransferase (Brucella abortus (strain 2308)).